The sequence spans 338 residues: UDP-glucose 4-epimerase (338 aa).

NAD(+)-binding positions include 11–12 (YI), 31–36 (DNLCNS), 58–59 (DI), 80–84 (FAGLK), N99, S124, Y149, K153, and F178. Positions 124 and 149 each coordinate substrate. The active-site Proton acceptor is Y149. Substrate-binding positions include N179, 199 to 200 (NL), 216 to 218 (SVF), R231, and 292 to 295 (RSGD).

Belongs to the NAD(P)-dependent epimerase/dehydratase family. As to quaternary structure, homodimer. NAD(+) serves as cofactor.

The catalysed reaction is UDP-alpha-D-glucose = UDP-alpha-D-galactose. The protein operates within carbohydrate metabolism; galactose metabolism. Functionally, involved in the metabolism of galactose. Catalyzes the conversion of UDP-galactose (UDP-Gal) to UDP-glucose (UDP-Glc) through a mechanism involving the transient reduction of NAD. By controlling the internal galactose concentration, it may be linked to the biosynthesis of lipopolysaccharide surface molecules, which are important for the pathogenesis of H.influenzae. The protein is UDP-glucose 4-epimerase (galE) of Haemophilus influenzae (strain ATCC 51907 / DSM 11121 / KW20 / Rd).